A 417-amino-acid chain; its full sequence is Cytoplasmic tRNA 2-thiolation protein 2 (417 aa).

Acidic residues predominate over residues 1-11 (MCSIVEDDFGD). The interval 1–24 (MCSIVEDDFGDEGGAHAMKEDTPQ) is disordered. The span at 13–22 (GGAHAMKEDT) shows a compositional bias: basic and acidic residues.

Belongs to the CTU2/NCS2 family.

It is found in the cytoplasm. It participates in tRNA modification; 5-methoxycarbonylmethyl-2-thiouridine-tRNA biosynthesis. In terms of biological role, plays a central role in 2-thiolation of mcm(5)S(2)U at tRNA wobble positions of tRNA(Lys), tRNA(Glu) and tRNA(Gln). May act by forming a heterodimer with NCS6/CTU1 that ligates sulfur from thiocarboxylated URM1 onto the uridine of tRNAs at wobble position. In Anopheles gambiae (African malaria mosquito), this protein is Cytoplasmic tRNA 2-thiolation protein 2.